The following is a 114-amino-acid chain: Lymphotactin (114 aa).

An N-terminal signal peptide occupies residues 1–21 (MRLLLLTFLGVCCFAAWVVEG). The cysteines at positions 32 and 69 are disulfide-linked. The disordered stretch occupies residues 87 to 114 (RASASKSKAETIPTQAQRSASTAVTLTG). A compositionally biased stretch (polar residues) spans 98–114 (IPTQAQRSASTAVTLTG).

It belongs to the intercrine gamma family.

The protein resides in the secreted. Its function is as follows. Chemotactic activity for lymphocytes but not for monocytes or neutrophils. In thymus, mediates medullary accumulation of thymic dendritic cells and contributes to regulatoy T cell development, playing a role in self-tolerance establishment. The chain is Lymphotactin (Xcl1) from Rattus norvegicus (Rat).